The following is a 1314-amino-acid chain: E3 ubiquitin-protein ligase RNF123 (1314 aa).

Position 2 is an N-acetylalanine (alanine 2). The B30.2/SPRY domain maps to 74-254 (VDSEDNESQG…VAFNFGSRPL (181 aa)). The disordered stretch occupies residues 460–483 (HRSSRESRDGKEAREETTEERQRR). The span at 462 to 483 (SSRESRDGKEAREETTEERQRR) shows a compositional bias: basic and acidic residues. Serine 675 carries the post-translational modification Phosphoserine. Asymmetric dimethylarginine is present on arginine 683. The tract at residues 968 to 974 (WILVRLW) is interaction with NFKB1. The Zn(2+) site is built by cysteine 1254, cysteine 1257, cysteine 1269, histidine 1271, cysteine 1274, cysteine 1277, cysteine 1288, and cysteine 1291. An RING-type zinc finger spans residues 1254-1292 (CPICYAHPISAVFQPCGHKSCKACINQHLMNNKDCFFCK).

In terms of assembly, component of the KPC complex composed of RNF123/KPC1 and UBAC1/KPC2. Interacts with UBAC1 and CDKN1B via its N-terminal domain. Interacts with RIGI (via N-terminus) and IFIH1 (via N-terminus). Ubiquitinated, leading to its degradation. Deubiquitinated by USP19, thereby stimulating CDKN1B ubiquitin-dependent degradation.

Its subcellular location is the cytoplasm. It carries out the reaction S-ubiquitinyl-[E2 ubiquitin-conjugating enzyme]-L-cysteine + [acceptor protein]-L-lysine = [E2 ubiquitin-conjugating enzyme]-L-cysteine + N(6)-ubiquitinyl-[acceptor protein]-L-lysine.. It participates in protein modification; protein ubiquitination. Functionally, catalytic subunit of the KPC complex that acts as E3 ubiquitin-protein ligase. Promotes the ubiquitination and proteasome-mediated degradation of CDKN1B which is the cyclin-dependent kinase inhibitor at the G0-G1 transition of the cell cycle. Also acts as a key regulator of the NF-kappa-B signaling by promoting maturation of the NFKB1 component of NF-kappa-B: acts by catalyzing ubiquitination of the NFKB1 p105 precursor, leading to limited proteasomal degradation of NFKB1 p105 and generation of the active NFKB1 p50 subunit. Functions also as an inhibitor of innate antiviral signaling mediated by RIGI and IFIH1 independently of its E3 ligase activity. Interacts with the N-terminal CARD domains of RIGI and IFIH1 and competes with the downstream adapter MAVS. This is E3 ubiquitin-protein ligase RNF123 (Rnf123) from Mus musculus (Mouse).